The following is a 352-amino-acid chain: ATP synthase subunit a 2 (352 aa).

A signal peptide spans 1 to 26 (MRKKAISRILALVVPVLLSLNSQAFA). The next 7 membrane-spanning stretches (helical) occupy residues 112–132 (VVMI…AGAS), 172–192 (FLPY…LGLI), 195–215 (GATA…TFVI), 232–252 (HLTA…EILG), 264–284 (LFAN…ISFI), 289–309 (IVAV…ELFV), and 310–330 (AFLQ…LATA).

This sequence belongs to the ATPase A chain family. As to quaternary structure, F-type ATPases have 2 components, CF(1) - the catalytic core - and CF(0) - the membrane proton channel. CF(1) has five subunits: alpha(3), beta(3), gamma(1), delta(1), epsilon(1). CF(0) has four main subunits: a, b, b' and c.

The protein localises to the cell inner membrane. Its function is as follows. Key component of the proton channel; it plays a direct role in the translocation of protons across the membrane. This chain is ATP synthase subunit a 2, found in Chlorobaculum tepidum (strain ATCC 49652 / DSM 12025 / NBRC 103806 / TLS) (Chlorobium tepidum).